Reading from the N-terminus, the 154-residue chain is MKISIYATLAALSLALPAVAQEGDAAKGEKEFNKCKACHMVQAPDGTDIVKGGKTGPNLYGVVGRKIASVEGFKYGDGILEVAEKNPDMVWSEADLIEYVTDPKPWLVEKTGDSAAKTKMTFKLGKNQADVVAFLAQHSPDAGAEAAPAEGAAN.

Positions Met-1–Ala-20 are cleaved as a signal peptide. Residue Gln-21 is modified to Pyrrolidone carboxylic acid. Heme c-binding residues include Cys-35, Cys-38, His-39, and Met-120. Residues Glu-150–Asn-154 constitute a propeptide that is removed on maturation.

Binds 1 heme c group covalently per subunit.

The chain is Cytochrome c-550 (cyc) from Paracoccus versutus (Thiobacillus versutus).